The sequence spans 245 residues: tRNA (guanine-N(1)-)-methyltransferase (245 aa).

S-adenosyl-L-methionine is bound by residues glycine 114 and 134–139; that span reads IGDYIL.

This sequence belongs to the RNA methyltransferase TrmD family. Homodimer.

It localises to the cytoplasm. It carries out the reaction guanosine(37) in tRNA + S-adenosyl-L-methionine = N(1)-methylguanosine(37) in tRNA + S-adenosyl-L-homocysteine + H(+). Specifically methylates guanosine-37 in various tRNAs. The sequence is that of tRNA (guanine-N(1)-)-methyltransferase from Listeria welshimeri serovar 6b (strain ATCC 35897 / DSM 20650 / CCUG 15529 / CIP 8149 / NCTC 11857 / SLCC 5334 / V8).